A 243-amino-acid chain; its full sequence is Ribonuclease 3 (243 aa).

One can recognise an RNase III domain in the interval 15 to 144 (NDTISKIINY…LIGAIYIDGG (130 aa)). E57 is a Mg(2+) binding site. D61 is an active-site residue. Mg(2+) contacts are provided by N130 and E133. The active site involves E133. The 70-residue stretch at 169–238 (DPKTSLQEWT…AELMLEKINN (70 aa)) folds into the DRBM domain.

It belongs to the ribonuclease III family. As to quaternary structure, homodimer. The cofactor is Mg(2+).

The protein resides in the cytoplasm. It carries out the reaction Endonucleolytic cleavage to 5'-phosphomonoester.. Functionally, digests double-stranded RNA. Involved in the processing of primary rRNA transcript to yield the immediate precursors to the large and small rRNAs (23S and 16S). Processes some mRNAs, and tRNAs when they are encoded in the rRNA operon. Processes pre-crRNA and tracrRNA of type II CRISPR loci if present in the organism. This chain is Ribonuclease 3, found in Wolbachia sp. subsp. Brugia malayi (strain TRS).